Consider the following 548-residue polypeptide: Probable malate:quinone oxidoreductase (548 aa).

Residues 522 to 548 (KPQAADSTPKAQLKPQPARKEVADIAL) form a disordered region. Basic and acidic residues predominate over residues 539–548 (ARKEVADIAL).

This sequence belongs to the MQO family. It depends on FAD as a cofactor.

The enzyme catalyses (S)-malate + a quinone = a quinol + oxaloacetate. Its pathway is carbohydrate metabolism; tricarboxylic acid cycle; oxaloacetate from (S)-malate (quinone route): step 1/1. This chain is Probable malate:quinone oxidoreductase, found in Escherichia fergusonii (strain ATCC 35469 / DSM 13698 / CCUG 18766 / IAM 14443 / JCM 21226 / LMG 7866 / NBRC 102419 / NCTC 12128 / CDC 0568-73).